Reading from the N-terminus, the 32-residue chain is uncharacterized protein (32 aa).

This is an uncharacterized protein from Mastigocladus laminosus (Fischerella sp.).